The chain runs to 92 residues: Transcriptional regulator WhiB1 (92 aa).

A 4Fe-4S Wbl-type domain is found at 12–74 (ACRDKDPELF…GGLSEDERRA (63 aa)). [4Fe-4S] cluster contacts are provided by Cys-13, Cys-41, Cys-44, and Cys-50.

Belongs to the WhiB family. It depends on [4Fe-4S] cluster as a cofactor. The Fe-S cluster can be nitrosylated by nitric oxide (NO). In terms of processing, upon Fe-S cluster removal intramolecular disulfide bonds are formed.

The protein resides in the cytoplasm. Functionally, acts as a transcriptional regulator. Probably redox-responsive. The apo- but not holo-form probably binds DNA. The chain is Transcriptional regulator WhiB1 (whiB1) from Bifidobacterium longum (strain NCC 2705).